Consider the following 635-residue polypeptide: Thrombopoietin receptor (635 aa).

Positions 1 to 25 (MPSWALFMVTSCLLLAPQNLAQVSS) are cleaved as a signal peptide. The Extracellular segment spans residues 26–491 (QDVSLLASDS…RVETATETAW (466 aa)). Disulfide bonds link cysteine 40/cysteine 50 and cysteine 77/cysteine 93. N-linked (GlcNAc...) asparagine glycosylation is found at asparagine 117 and asparagine 178. Positions 172–281 (GPRDPKNSTG…WSLPVTVDLP (110 aa)) constitute a Fibronectin type-III 1 domain. 4 disulfide bridges follow: cysteine 193–cysteine 323, cysteine 194–cysteine 241, cysteine 291–cysteine 301, and cysteine 334–cysteine 352. Residues 205–232 (ALDQSPCAQPTMPWQDGPKQTSPSREAS) form a disordered region. A glycan (N-linked (GlcNAc...) asparagine) is linked at asparagine 298. Asparagine 358 carries N-linked (GlcNAc...) asparagine glycosylation. Residues 392-486 (PTPNLHWREI…WSDPTRVETA (95 aa)) enclose the Fibronectin type-III 2 domain. The short motif at 474-478 (WSSWS) is the WSXWS motif element. Residues 492–513 (ISLVTALHLVLGLSAVLGLLLL) traverse the membrane as a helical segment. Over 514 to 635 (RWQFPAHYRR…YLPLSYWQQP (122 aa)) the chain is Cytoplasmic. The short motif at 528-536 (LWPSLPDLH) is the Box 1 motif element. Residues lysine 553 and lysine 573 each participate in a glycyl lysine isopeptide (Lys-Gly) (interchain with G-Cter in ubiquitin) cross-link. A phosphotyrosine mark is found at tyrosine 591, tyrosine 626, and tyrosine 631.

It belongs to the type I cytokine receptor family. Type 1 subfamily. In terms of assembly, homodimer. Interacts with ATXN2L. Interacts with JAK2 and TYK2; these interactions increase MPL localization to the cell membrane. Interacts with THPO. Interacts with SHIP/INPP5D. Interacts with BTK. Interacts with SYK; this interaction negatively regulates THPO-mediated ERK1/2 signaling. Phosphorylated at Tyr-591 in response to THPO stimulation. In terms of processing, ubiquitination at Lys-553 and Lys-573 targets MPL for degradation by both the lysosomal and proteasomal pathways. The E3 ubiquitin-protein ligase CBL significantly contributes to this ubiquitination. Expressed at a low level in a large number of cells of hematopoietic origin. Isoform 1 and isoform 2 are always found to be coexpressed.

It localises to the cell membrane. Its subcellular location is the golgi apparatus. The protein resides in the cell surface. Receptor for thrombopoietin that regulates hematopoietic stem cell renewal, megakaryocyte differentiation, and platelet formation. Upon activation by THPO, induces rapid tyrosine phosphorylation and activation of JAK2, providing docking sites for many signaling proteins such as STAT5, SHIP/INPP5D, GRB2, SOS1 and PI3K. In turn, These signaling cascades lead to the proliferation, survival, and differentiation of megakaryocytes, ultimately leading to increased platelet production. This Homo sapiens (Human) protein is Thrombopoietin receptor (MPL).